We begin with the raw amino-acid sequence, 515 residues long: Bifunctional purine biosynthesis protein PurH (515 aa).

Positions 1–145 constitute an MGS-like domain; that stretch reads MTKRALISVS…KNHASVTVVV (145 aa).

It belongs to the PurH family.

The catalysed reaction is (6R)-10-formyltetrahydrofolate + 5-amino-1-(5-phospho-beta-D-ribosyl)imidazole-4-carboxamide = 5-formamido-1-(5-phospho-D-ribosyl)imidazole-4-carboxamide + (6S)-5,6,7,8-tetrahydrofolate. It catalyses the reaction IMP + H2O = 5-formamido-1-(5-phospho-D-ribosyl)imidazole-4-carboxamide. It functions in the pathway purine metabolism; IMP biosynthesis via de novo pathway; 5-formamido-1-(5-phospho-D-ribosyl)imidazole-4-carboxamide from 5-amino-1-(5-phospho-D-ribosyl)imidazole-4-carboxamide (10-formyl THF route): step 1/1. The protein operates within purine metabolism; IMP biosynthesis via de novo pathway; IMP from 5-formamido-1-(5-phospho-D-ribosyl)imidazole-4-carboxamide: step 1/1. The polypeptide is Bifunctional purine biosynthesis protein PurH (Streptococcus suis).